The following is a 267-amino-acid chain: Hemin import ATP-binding protein HmuV (267 aa).

The region spanning 3–243 (LEVRGIEVWR…ELVARVFGLR (241 aa)) is the ABC transporter domain. 35-42 (GPNGAGKS) provides a ligand contact to ATP.

This sequence belongs to the ABC transporter superfamily. Heme (hemin) importer (TC 3.A.1.14.5) family. In terms of assembly, the complex is composed of two ATP-binding proteins (HmuV), two transmembrane proteins (HmuU) and a solute-binding protein (HmuT).

The protein resides in the cell inner membrane. Functionally, part of the ABC transporter complex HmuTUV involved in hemin import. Responsible for energy coupling to the transport system. This chain is Hemin import ATP-binding protein HmuV, found in Myxococcus xanthus (strain DK1622).